The sequence spans 171 residues: MEIILIKPVRKLGKIGDMLKVADGFGRNYLLPQKLAIRATEPNKELIVKQKHEFEAKDKQIREEVEKINALIKDQKLVFIRQASDDGKLFGSVTNKEIADKLSKNVSYNISHSNIILDKQIKSTGVYTVEIRLHAELNDIVTVIVARSESEAQDYLREKKTETSEDLAESA.

Belongs to the bacterial ribosomal protein bL9 family.

Its function is as follows. Binds to the 23S rRNA. This is Large ribosomal subunit protein bL9 from Rickettsia akari (strain Hartford).